An 87-amino-acid polypeptide reads, in one-letter code: UPF0250 protein ESA_02696 (87 aa).

It belongs to the UPF0250 family.

The sequence is that of UPF0250 protein ESA_02696 from Cronobacter sakazakii (strain ATCC BAA-894) (Enterobacter sakazakii).